The following is a 274-amino-acid chain: NAD kinase (274 aa).

The active-site Proton acceptor is Asp59. NAD(+) contacts are provided by residues 59–60 (DG), 133–134 (ND), Arg144, Asp163, 174–179 (TAYALS), and Gln233.

It belongs to the NAD kinase family. Requires a divalent metal cation as cofactor.

It localises to the cytoplasm. The enzyme catalyses NAD(+) + ATP = ADP + NADP(+) + H(+). Functionally, involved in the regulation of the intracellular balance of NAD and NADP, and is a key enzyme in the biosynthesis of NADP. Catalyzes specifically the phosphorylation on 2'-hydroxyl of the adenosine moiety of NAD to yield NADP. This Aquifex aeolicus (strain VF5) protein is NAD kinase.